We begin with the raw amino-acid sequence, 126 residues long: MFS14 protein (126 aa).

The or 24, or 26 signal peptide spans 1-23; the sequence is MALEAATAPRALLAACLVLLVLG.

In terms of tissue distribution, enhanced expression in male flowers. Accumulates in the tapetum.

The protein is MFS14 protein (MFS14) of Zea mays (Maize).